A 143-amino-acid polypeptide reads, in one-letter code: Interleukin-3 (143 aa).

The signal sequence occupies residues 1-23 (MSSFPILHLLLLLLGCQVPQAQG). Residue Asn-79 is glycosylated (N-linked (GlcNAc...) asparagine).

Belongs to the IL-3 family. In terms of assembly, monomer.

The protein resides in the secreted. Functionally, granulocyte/macrophage colony-stimulating factors are cytokines that act in hematopoiesis by controlling the production, differentiation, and function of 2 related white cell populations of the blood, the granulocytes and the monocytes-macrophages. Its function is as follows. This CSF induces granulocytes, macrophages, mast cells, stem cells, erythroid cells, eosinophils and megakaryocytes. This chain is Interleukin-3 (IL3), found in Canis lupus familiaris (Dog).